The following is a 235-amino-acid chain: Voltage-gated hydrogen channel 1 (235 aa).

Topologically, residues 1-65 (MSRYLKHFTA…SLRKLYSTER (65 aa)) are cytoplasmic. Residues 66–86 (FQIVVVCLVVLDAIFVLCELL) traverse the membrane as a helical segment. Residues 87-103 (IDLSIIEADHHRIAPQV) are Extracellular-facing. Residues 104-126 (FHYLSLALLTFFMVELAGKIFAY) form a helical membrane-spanning segment. The Cytoplasmic segment spans residues 127–134 (RLEFLHHK). A helical transmembrane segment spans residues 135–155 (FEVFDGIVVVVSFILDIIYIS). Residues 156–162 (KEDAFDA) lie on the Extracellular side of the membrane. A helical membrane pass occupies residues 163 to 183 (MGLLILLRLWRVARIINGILV). The Cytoplasmic portion of the chain corresponds to 184–235 (SVQNRANHRVEKLKEINESLVHQVNELKEQNTKMDQENVRLRALLKDHSIDF). A coiled-coil region spans residues 187 to 231 (NRANHRVEKLKEINESLVHQVNELKEQNTKMDQENVRLRALLKDH).

It belongs to the hydrogen channel family. As to quaternary structure, homodimer.

The protein resides in the membrane. The protein localises to the cell membrane. Its function is as follows. Mediates the voltage-dependent proton permeability of excitable membranes. Forms a proton-selective channel through which protons may pass in accordance with their electrochemical gradient. This is Voltage-gated hydrogen channel 1 (hvcn1) from Danio rerio (Zebrafish).